The sequence spans 337 residues: Putative high mobility group B protein 11 (337 aa).

An ARID domain is found at 34 to 125 (VRNPELFWEM…MLFEFEHLYY (92 aa)). 2 disordered regions span residues 197-221 (TKRG…QRTG) and 298-337 (AGTS…EVSQ). The HMG box DNA-binding region spans 215 to 282 (PKRQRTGYNF…RYKMEILQYR (68 aa)). A compositionally biased stretch (low complexity) spans 319 to 329 (TDACTSASSAA).

It belongs to the HMGB family.

The protein localises to the nucleus. Its function is as follows. Binds preferentially DNA with A/T-rich content. In Arabidopsis thaliana (Mouse-ear cress), this protein is Putative high mobility group B protein 11 (HMGB11).